Here is a 235-residue protein sequence, read N- to C-terminus: Large ribosomal subunit protein uL1 (235 aa).

This sequence belongs to the universal ribosomal protein uL1 family. In terms of assembly, part of the 50S ribosomal subunit.

In terms of biological role, binds directly to 23S rRNA. The L1 stalk is quite mobile in the ribosome, and is involved in E site tRNA release. Functionally, protein L1 is also a translational repressor protein, it controls the translation of the L11 operon by binding to its mRNA. This is Large ribosomal subunit protein uL1 from Prochlorococcus marinus (strain MIT 9301).